Reading from the N-terminus, the 215-residue chain is Ribose-5-phosphate isomerase A (215 aa).

Substrate-binding positions include 26–29 (TGST), 79–82 (DGAD), and 92–95 (KGGG). Catalysis depends on Glu101, which acts as the Proton acceptor. Residue Lys119 coordinates substrate.

It belongs to the ribose 5-phosphate isomerase family. In terms of assembly, homodimer.

It catalyses the reaction aldehydo-D-ribose 5-phosphate = D-ribulose 5-phosphate. It participates in carbohydrate degradation; pentose phosphate pathway; D-ribose 5-phosphate from D-ribulose 5-phosphate (non-oxidative stage): step 1/1. Catalyzes the reversible conversion of ribose-5-phosphate to ribulose 5-phosphate. The polypeptide is Ribose-5-phosphate isomerase A (Xanthomonas oryzae pv. oryzae (strain MAFF 311018)).